The chain runs to 331 residues: Biotin synthase (331 aa).

The Radical SAM core domain maps to 39-264 (SELQTCYLVS…VFPQSMVRLA (226 aa)). 3 residues coordinate [4Fe-4S] cluster: Cys54, Cys58, and Cys61. [2Fe-2S] cluster-binding residues include Cys98, Cys130, Cys190, and Arg262.

This sequence belongs to the radical SAM superfamily. Biotin synthase family. As to quaternary structure, homodimer. It depends on [4Fe-4S] cluster as a cofactor. [2Fe-2S] cluster is required as a cofactor.

It catalyses the reaction (4R,5S)-dethiobiotin + (sulfur carrier)-SH + 2 reduced [2Fe-2S]-[ferredoxin] + 2 S-adenosyl-L-methionine = (sulfur carrier)-H + biotin + 2 5'-deoxyadenosine + 2 L-methionine + 2 oxidized [2Fe-2S]-[ferredoxin]. Its pathway is cofactor biosynthesis; biotin biosynthesis; biotin from 7,8-diaminononanoate: step 2/2. In terms of biological role, catalyzes the conversion of dethiobiotin (DTB) to biotin by the insertion of a sulfur atom into dethiobiotin via a radical-based mechanism. In Chlamydia abortus (strain DSM 27085 / S26/3) (Chlamydophila abortus), this protein is Biotin synthase.